The following is a 396-amino-acid chain: Putative isochorismate synthase (396 aa).

This sequence belongs to the isochorismate synthase family.

The catalysed reaction is chorismate = isochorismate. The protein operates within siderophore biosynthesis; amonabactin biosynthesis. Functionally, involved in the synthesis of amonabactin, a phenolate siderophore containing 2,3-dihydroxybenzoic acid (2,3-DHB). The sequence is that of Putative isochorismate synthase (amoA) from Aeromonas hydrophila.